The primary structure comprises 761 residues: Proton-coupled zinc antiporter SLC30A5 (761 aa).

Methionine 1 carries the N-acetylmethionine modification. Topologically, residues 1 to 29 are cytoplasmic; sequence MEEKYGGDARPGPGGGLGPVDVPSARLTR. The chain crosses the membrane as a helical span at residues 30–46; that stretch reads YILLLCLTKCLKAVGLF. The Lumenal portion of the chain corresponds to 47–54; it reads ESYDLLKA. A helical transmembrane segment spans residues 55–75; that stretch reads VHIVQFIFILKLGTAFFMVLF. The Cytoplasmic segment spans residues 76-96; the sequence is QKPFSSGKPITKHQWIKIFKH. A helical transmembrane segment spans residues 97 to 117; the sequence is AVAGCIISLLWFFGLTLCGPL. Position 118 (arginine 118) is a topological domain, lumenal. The chain crosses the membrane as a helical span at residues 119-139; sequence TLLLFEHSDIVVISLLSVLFT. Residues 140-150 are Cytoplasmic-facing; sequence SSGGGPAKTRG. The chain crosses the membrane as a helical span at residues 151-171; sequence AAFFIIAVICLLLFDNDDLMA. The Lumenal segment spans residues 172 to 191; the sequence is KMAEHPEGHHDSALTHMLYT. A helical transmembrane segment spans residues 192–212; that stretch reads AIAFLGVADHKGGVLLLVLAL. Residues 213-236 lie on the Cytoplasmic side of the membrane; sequence CCKVGFHTASRKLSIDVGGAKRLQ. Residues 237-257 traverse the membrane as a helical segment; that stretch reads ALSQLVSVFLLCPWVIVLSVT. Over 258–264 the chain is Lumenal; that stretch reads TESKVES. The chain crosses the membrane as a helical span at residues 265 to 285; the sequence is WFSLIMPFTTVIFFVMILDFY. Residues 286-301 lie on the Cytoplasmic side of the membrane; it reads MDSVCSVKMDVSKCAR. Residues 302–322 traverse the membrane as a helical segment; the sequence is YGSFPIFISALLFGNFWTHPI. The Lumenal portion of the chain corresponds to 323–340; it reads TDQLRAMNRAAHQESTEH. The chain crosses the membrane as a helical span at residues 341 to 361; it reads VLSGGVVVSAVFFILSANILS. The Cytoplasmic segment spans residues 362–416; the sequence is SPSKRGQKGTLIGYSPEGTPLYHFMGDAFQHSSQSVPRFIKDSLKQVLEESDSRQ. Residues 417-437 form a helical membrane-spanning segment; that stretch reads IFYFLCLNLLFTFVELFYGVL. A mediates homodimerization with SLC30A6 region spans residues 418 to 636; the sequence is FYFLCLNLLF…VLIFLSVIPL (219 aa). At 438-446 the chain is on the lumenal side; it reads TNSLGLISD. A helical transmembrane segment spans residues 447–467; sequence GFHMLFDCSALVMGLFAALMS. Zn(2+) contacts are provided by histidine 449 and aspartate 453. Residues 468–481 lie on the Cytoplasmic side of the membrane; it reads RWKATRIFSYGYGR. A helical transmembrane segment spans residues 482-502; that stretch reads IEILSGFINGLFLIVIAFFVF. Topologically, residues 503–518 are lumenal; that stretch reads MESVARLIDPPELDTN. Residues 519-539 form a helical membrane-spanning segment; the sequence is MLTPVSVGGLIVNLIGICAFS. The his-rich loop; required for zinc transport stretch occupies residues 540-574; sequence HAHSHGHGASQGNCHSDHGHSHHAHGHGHDHGHSH. Residues 540-588 lie on the Cytoplasmic side of the membrane; the sequence is HAHSHGHGASQGNCHSDHGHSHHAHGHGHDHGHSHGFTGGGMNANMRGV. The disordered stretch occupies residues 549-576; it reads SQGNCHSDHGHSHHAHGHGHDHGHSHGF. Residues 589 to 609 form a helical membrane-spanning segment; it reads FLHVLADTLGSIGVIVSTVLI. Residues histidine 591 and aspartate 595 each coordinate Zn(2+). Topologically, residues 610 to 613 are lumenal; that stretch reads EQFG. Residues 614-634 form a helical membrane-spanning segment; that stretch reads WFIADPLCSLFIAVLIFLSVI. Over 635–761 the chain is Cytoplasmic; it reads PLIKDACQVL…KYCKDGTYIM (127 aa).

It belongs to the cation diffusion facilitator (CDF) transporter (TC 2.A.4) family. SLC30A subfamily. As to quaternary structure, heterodimer with SLC30A6/ZNT6; form a functional zinc ion transmembrane transporter. In terms of processing, could homodimerize through the formation of dityrosine bonds upon oxidative stress. Ubiquitously expressed.

It is found in the golgi apparatus. The protein localises to the golgi stack membrane. It localises to the cytoplasmic vesicle. Its subcellular location is the COPII-coated vesicle membrane. The protein resides in the secretory vesicle membrane. It is found in the trans-Golgi network membrane. It catalyses the reaction Zn(2+)(in) + 2 H(+)(out) = Zn(2+)(out) + 2 H(+)(in). In terms of biological role, together with SLC30A6 forms a functional proton-coupled zinc ion antiporter mediating zinc entry into the lumen of organelles along the secretory pathway. By contributing to zinc ion homeostasis within the early secretory pathway, regulates the activation and folding of enzymes like alkaline phosphatases and enzymes involved in phosphatidylinositol glycan anchor biosynthesis. Through the transport of zinc into secretory granules of pancreatic beta-cells, plays an important role in the storage and secretion of insulin. In Mus musculus (Mouse), this protein is Proton-coupled zinc antiporter SLC30A5.